A 421-amino-acid polypeptide reads, in one-letter code: Serine hydroxymethyltransferase (421 aa).

Residues Leu121 and 125 to 127 (GHL) contribute to the (6S)-5,6,7,8-tetrahydrofolate site. Residue Lys230 is modified to N6-(pyridoxal phosphate)lysine.

This sequence belongs to the SHMT family. Homodimer. Requires pyridoxal 5'-phosphate as cofactor.

It localises to the cytoplasm. The catalysed reaction is (6R)-5,10-methylene-5,6,7,8-tetrahydrofolate + glycine + H2O = (6S)-5,6,7,8-tetrahydrofolate + L-serine. It participates in one-carbon metabolism; tetrahydrofolate interconversion. It functions in the pathway amino-acid biosynthesis; glycine biosynthesis; glycine from L-serine: step 1/1. Its function is as follows. Catalyzes the reversible interconversion of serine and glycine with tetrahydrofolate (THF) serving as the one-carbon carrier. This reaction serves as the major source of one-carbon groups required for the biosynthesis of purines, thymidylate, methionine, and other important biomolecules. Also exhibits THF-independent aldolase activity toward beta-hydroxyamino acids, producing glycine and aldehydes, via a retro-aldol mechanism. This is Serine hydroxymethyltransferase from Carboxydothermus hydrogenoformans (strain ATCC BAA-161 / DSM 6008 / Z-2901).